The chain runs to 505 residues: uncharacterized protein (505 aa).

14 helical membrane passes run 9-29, 49-69, 86-106, 122-142, 156-176, 181-201, 235-255, 261-281, 310-330, 341-361, 371-391, 395-415, 435-455, and 464-484; these read ANLT…PFIV, YFSV…SVAA, AASV…AFFI, LSIL…GFGA, IQAV…ACFA, QIQL…FYFF, IGVL…LGAS, AAII…ASLF, LLLA…LTIW, LLFI…LFYI, PAIV…TLSG, LGLY…NAIF, IIGP…IQFI, and LIAT…MLVC.

The protein resides in the cell membrane. In terms of biological role, may be involved in the production of the exopolysaccharide (EPS) component of the extracellular matrix during biofilm formation. EPS is responsible for the adhesion of chains of cells into bundles. This is an uncharacterized protein from Bacillus subtilis (strain 168).